Consider the following 507-residue polypeptide: Fumarate hydratase, mitochondrial (507 aa).

A mitochondrion-targeting transit peptide spans 1-41; that stretch reads MYRALRLLARSRRLLRVPSAGAAVSGEATTLPRCAPNVARM. An N6-acetyllysine; alternate mark is found at Lys-58, Lys-63, and Lys-77. Lys-58, Lys-63, and Lys-77 each carry N6-succinyllysine; alternate. A Phosphothreonine modification is found at Thr-82. An N6-acetyllysine; alternate mark is found at Lys-112 and Lys-119. 2 positions are modified to N6-succinyllysine; alternate: Lys-112 and Lys-119. Substrate-binding positions include 142–144, 173–176, and 183–185; these read SGT, HPND, and SSN. Residue Lys-210 is modified to N6-acetyllysine. Lys-220 carries the N6-acetyllysine; alternate modification. Lys-220 is subject to N6-succinyllysine; alternate. Thr-231 contributes to the substrate binding site. His-232 functions as the Proton donor/acceptor in the catalytic mechanism. Thr-233 carries the post-translational modification Phosphothreonine. Lys-289 carries the post-translational modification N6-acetyllysine; alternate. Lys-289 bears the N6-succinyllysine; alternate mark. Ser-362 is a catalytic residue. Substrate-binding positions include Ser-363 and 368–370; that span reads KVN. Phosphoserine is present on Ser-363. N6-succinyllysine occurs at positions 464 and 470. Lys-499 is modified (N6-acetyllysine).

It belongs to the class-II fumarase/aspartase family. Fumarase subfamily. In terms of assembly, homotetramer. Interacts with H2AZ1. Post-translationally, phosphorylation at Thr-233 by PRKDC in response to DNA damage promotes translocation to the nucleus and recruitment to DNA double-strand breaks (DSBs).

The protein resides in the mitochondrion. It localises to the cytoplasm. It is found in the cytosol. The protein localises to the nucleus. Its subcellular location is the chromosome. The enzyme catalyses (S)-malate = fumarate + H2O. It participates in carbohydrate metabolism; tricarboxylic acid cycle; (S)-malate from fumarate: step 1/1. Catalyzes the reversible stereospecific interconversion of fumarate to L-malate. Experiments in different species have demonstrated that specific isoforms of this protein act in defined pathways and favor one direction over the other. Its function is as follows. Catalyzes the hydration of fumarate to L-malate in the tricarboxylic acid (TCA) cycle to facilitate a transition step in the production of energy in the form of NADH. In terms of biological role, catalyzes the dehydration of L-malate to fumarate. Fumarate metabolism in the cytosol plays a role during urea cycle and arginine metabolism; fumarate being a by-product of the urea cycle and amino-acid catabolism. Also plays a role in DNA repair by promoting non-homologous end-joining (NHEJ). In response to DNA damage and phosphorylation by PRKDC, translocates to the nucleus and accumulates at DNA double-strand breaks (DSBs): acts by catalyzing formation of fumarate, an inhibitor of KDM2B histone demethylase activity, resulting in enhanced dimethylation of histone H3 'Lys-36' (H3K36me2). In Mus musculus (Mouse), this protein is Fumarate hydratase, mitochondrial.